We begin with the raw amino-acid sequence, 134 residues long: Phosphoribosyl-AMP cyclohydrolase (134 aa).

A Mg(2+)-binding site is contributed by Asp-80. Residue Cys-81 participates in Zn(2+) binding. 2 residues coordinate Mg(2+): Asp-82 and Asp-84. Zn(2+) is bound by residues Cys-98 and Cys-105.

This sequence belongs to the PRA-CH family. In terms of assembly, homodimer. Mg(2+) is required as a cofactor. It depends on Zn(2+) as a cofactor.

The protein localises to the cytoplasm. It catalyses the reaction 1-(5-phospho-beta-D-ribosyl)-5'-AMP + H2O = 1-(5-phospho-beta-D-ribosyl)-5-[(5-phospho-beta-D-ribosylamino)methylideneamino]imidazole-4-carboxamide. The protein operates within amino-acid biosynthesis; L-histidine biosynthesis; L-histidine from 5-phospho-alpha-D-ribose 1-diphosphate: step 3/9. Catalyzes the hydrolysis of the adenine ring of phosphoribosyl-AMP. In Bordetella bronchiseptica (strain ATCC BAA-588 / NCTC 13252 / RB50) (Alcaligenes bronchisepticus), this protein is Phosphoribosyl-AMP cyclohydrolase.